A 322-amino-acid chain; its full sequence is uncharacterized protein (322 aa).

Residues 1–27 (MKRLFWNLKHKKAWLVLLLGTGMILSS) form the signal peptide. Cys-28 is lipidated: N-palmitoyl cysteine. A lipid anchor (S-diacylglycerol cysteine) is attached at Cys-28. Polar residues predominate over residues 235 to 254 (DNSTNPNAPGSGQGDSTPPA). Positions 235 to 298 (DNSTNPNAPG…AVQRSQKSYG (64 aa)) are disordered. The span at 257-267 (GEGGGSDGSSG) shows a compositional bias: gly residues. Over residues 274-296 (NGQNTTPTSPQSSQPAVQRSQKS) the composition is skewed to polar residues.

The protein resides in the cell membrane. This is an uncharacterized protein from Mycoplasma genitalium (strain ATCC 33530 / DSM 19775 / NCTC 10195 / G37) (Mycoplasmoides genitalium).